A 279-amino-acid polypeptide reads, in one-letter code: Inorganic pyrophosphatase (279 aa).

Residue R100 participates in diphosphate binding. D132, D137, and D169 together coordinate Mg(2+).

It belongs to the PPase family. Mg(2+) serves as cofactor.

The catalysed reaction is diphosphate + H2O = 2 phosphate + H(+). The chain is Inorganic pyrophosphatase (ppa1) from Dictyostelium discoideum (Social amoeba).